The sequence spans 456 residues: Probable serine incorporator (456 aa).

A run of 11 helical transmembrane segments spans residues Ala10 to Phe32, Ile44 to Gly64, Val95 to Ser115, Gly126 to Pro146, Val153 to Leu173, Val195 to Ile215, Lys234 to Pro254, Leu265 to Phe285, Leu301 to Tyr321, Val383 to Met403, and Ile430 to Phe450.

This sequence belongs to the TDE1 family.

It is found in the endoplasmic reticulum membrane. Functionally, enhances the incorporation of serine into phosphatidylserine and sphingolipids. The chain is Probable serine incorporator (serinc) from Nematostella vectensis (Starlet sea anemone).